The chain runs to 398 residues: Putative glutamate--cysteine ligase 2 (398 aa).

Belongs to the glutamate--cysteine ligase type 2 family. YbdK subfamily.

It carries out the reaction L-cysteine + L-glutamate + ATP = gamma-L-glutamyl-L-cysteine + ADP + phosphate + H(+). Functionally, ATP-dependent carboxylate-amine ligase which exhibits weak glutamate--cysteine ligase activity. The polypeptide is Putative glutamate--cysteine ligase 2 (Micrococcus luteus (strain ATCC 4698 / DSM 20030 / JCM 1464 / CCM 169 / CCUG 5858 / IAM 1056 / NBRC 3333 / NCIMB 9278 / NCTC 2665 / VKM Ac-2230) (Micrococcus lysodeikticus)).